The following is an 87-amino-acid chain: Large ribosomal subunit protein bL27 (87 aa).

Residues 1 to 21 (MAHKKAGGSSRNGRDSESKRL) form a disordered region.

This sequence belongs to the bacterial ribosomal protein bL27 family.

In Paraburkholderia xenovorans (strain LB400), this protein is Large ribosomal subunit protein bL27.